The following is a 164-amino-acid chain: MGVTAIYPGTFDPITHGHTDLIQRGARLFDRLIVGVAANPSPSKAPAFAVEERLELARTALAGIDNVEVEAFTSLLVDFVAHHEAQVIVRGLRAVSDFEYEFQLASMNRQLRADVETVFLTPAEQYAFISSSLVREVAALGGDVSRFVHPAVAEALRNRVRRVP.

Threonine 10 contributes to the substrate binding site. ATP is bound by residues 10-11 and histidine 18; that span reads TF. Substrate contacts are provided by lysine 44, leucine 76, and arginine 90. ATP-binding positions include 91-93, glutamate 101, and 126-132; these read GLR and YAFISSS.

It belongs to the bacterial CoaD family. As to quaternary structure, homohexamer. Mg(2+) serves as cofactor.

The protein resides in the cytoplasm. It catalyses the reaction (R)-4'-phosphopantetheine + ATP + H(+) = 3'-dephospho-CoA + diphosphate. Its pathway is cofactor biosynthesis; coenzyme A biosynthesis; CoA from (R)-pantothenate: step 4/5. Its function is as follows. Reversibly transfers an adenylyl group from ATP to 4'-phosphopantetheine, yielding dephospho-CoA (dPCoA) and pyrophosphate. The protein is Phosphopantetheine adenylyltransferase of Halorhodospira halophila (strain DSM 244 / SL1) (Ectothiorhodospira halophila (strain DSM 244 / SL1)).